A 368-amino-acid chain; its full sequence is Type 2 DNA topoisomerase 6 subunit A (368 aa).

Residues 9–148 (TEDEIARERL…FHMRPEESGA (140 aa)) form the Topo IIA-type catalytic domain. Tyr103 acts as the O-(5'-phospho-DNA)-tyrosine intermediate in catalysis. Glu201 and Asp253 together coordinate Mg(2+).

Belongs to the TOP6A family. In terms of assembly, homodimer. Heterotetramer of two Top6A and two Top6B chains. Requires Mg(2+) as cofactor.

The enzyme catalyses ATP-dependent breakage, passage and rejoining of double-stranded DNA.. In terms of biological role, relaxes both positive and negative superturns and exhibits a strong decatenase activity. This Natronomonas pharaonis (strain ATCC 35678 / DSM 2160 / CIP 103997 / JCM 8858 / NBRC 14720 / NCIMB 2260 / Gabara) (Halobacterium pharaonis) protein is Type 2 DNA topoisomerase 6 subunit A.